A 544-amino-acid chain; its full sequence is MGSPEDDLIGIPFPDHSSELLSCLNEQRQLGHLCDLTIRTQGLEYRTHRAVLAACSHYFKKLFTEGGGGTVMGTGGGGTASGGAGAGVCELDFVGPEALGALLEFAYTATLTTSSANMPAVLQAARLLEIPCVIAACMEILQGSGLEAPSPDEDDCERARQYLEAFATATTTASTSGMPNGEDSPPQVPLLPPPPPPPRPVARRSRKPRKAFLQTKGARANHLVPEAPTVLTHPLTYEEEEMVGRLGNSGGSGLGDSYSPPTGAASPAEGPLNYEVFEGEEEEEEMAYPPGYGLAQSNEPSLSPEELGSDEDPIDPDLMAYLSSLHQDALTPGLDGQDKLVRKRRSQMPQECPVCHKIIHGAGKLPRHMRTHTGEKPFACEVCGVRFTRNDKLKIHMRKHTGERPYSCPHCPARFLHSYDLKNHMHLHTGDRPYECHLCHKAFAKEDHLQRHLKGQNCLEVRTRRRRKDDVAAPHYPPPSTTTSSPAGLDLSNGHLDTFHLSLARFWEQSATTGPPVTTQGPPEEEEEEGTPTTPQAEGAMESS.

The BTB domain maps to 34–115 (CDLTIRTQGL…AYTATLTTSS (82 aa)). The residue at position 150 (Ser150) is a Phosphoserine. Disordered stretches follow at residues 171 to 221 (TTAS…ARAN) and 244 to 314 (GRLG…EDPI). Pro residues predominate over residues 186 to 200 (PQVPLLPPPPPPPRP). The segment covering 201-210 (VARRSRKPRK) has biased composition (basic residues). Lys210 and Lys216 each carry N6-acetyllysine; by EP300; alternate. Residues Lys210 and Lys216 each participate in a glycyl lysine isopeptide (Lys-Gly) (interchain with G-Cter in ubiquitin); alternate cross-link. Positions 277–286 (FEGEEEEEEM) are enriched in acidic residues. At Lys339 the chain carries N6-acetyllysine; by EP300; alternate. Lys339 participates in a covalent cross-link: Glycyl lysine isopeptide (Lys-Gly) (interchain with G-Cter in ubiquitin); alternate. The interval 348–404 (MPQECPVCHKIIHGAGKLPRHMRTHTGEKPFACEVCGVRFTRNDKLKIHMRKHTGER) is required for interaction with and acetylation by EP300. The segment at 350 to 372 (QECPVCHKIIHGAGKLPRHMRTH) adopts a C2H2-type 1 zinc-finger fold. Thr373 carries the phosphothreonine modification. C2H2-type zinc fingers lie at residues 378–400 (FACE…MRKH) and 406–428 (YSCP…MHLH). The C2H2-type 4; atypical zinc-finger motif lies at 434–458 (YECHLCHKAFAKEDHLQRHLKGQNC). 2 disordered regions span residues 465–493 (RRRK…DLSN) and 507–544 (WEQS…MESS). Composition is skewed to low complexity over residues 511–522 (ATTGPPVTTQGP) and 531–544 (TPTT…MESS).

Homodimerizes. Interacts with NCL, NEDD4 and YBX1. Interacts with HNRNPU (via RNA-binding RGG-box region); the interaction facilitates the recruitment of long non-coding RNA Blnc1 by ZBTB7B. Interacts with HDAC4 and HDAC5; the interaction allows the recruitment of HDAC4 and HDAC5 on CD8 loci for deacetylation and possible inhibition of CD8 genes expression. Acetylated directly and specifically by EP300. EP300-mediated acetylation of Lys-210, Lys-216 and Lys-339 stabilizes the protein by antagonizing ubiquitin conjugation. In terms of processing, ubiquitinated, leading to proteasomal degradation. Competes with acetylation on Lys-210, Lys-216 and Lys-339. Widely expressed, with a higher level in skin. Expressed in thymus. Restricted to CD4 cells (mature single positive CD4(+) and intermediate CD4(+)CD8(+) cells). Expressed in the luminal epithelial cells in the mammary glands where is up-regulated at late pregnancy and lactation. Expression is enriched in brown fat.

The protein localises to the nucleus. Its function is as follows. Transcription regulator that acts as a key regulator of lineage commitment of immature T-cell precursors. Exerts distinct biological functions in the mammary epithelial cells and T cells in a tissue-specific manner. Necessary and sufficient for commitment of CD4 lineage, while its absence causes CD8 commitment. Development of immature T-cell precursors (thymocytes) to either the CD4 helper or CD8 killer T-cell lineages correlates precisely with their T-cell receptor specificity for major histocompatibility complex class II or class I molecules, respectively. Cross-antagonism between ZBTB7B and CBF complexes are determinative to CD4 versus CD8 cell fate decision. Suppresses RUNX3 expression and imposes CD4+ lineage fate by inducing the SOCS suppressors of cytokine signaling. induces, as a transcriptional activator, SOCS genes expression which represses RUNX3 expression and promotes the CD4+ lineage fate. During CD4 lineage commitment, associates with multiple sites at the CD8 locus, acting as a negative regulator of the CD8 promoter and enhancers by epigenetic silencing through the recruitment of class II histone deacetylases, such as HDAC4 and HDAC5, to these loci. Regulates the development of IL17-producing CD1d-restricted naural killer (NK) T cells. Also functions as an important metabolic regulator in the lactating mammary glands. Critical feed-forward regulator of insulin signaling in mammary gland lactation, directly regulates expression of insulin receptor substrate-1 (IRS-1) and insulin-induced Akt-mTOR-SREBP signaling. Transcriptional repressor of the collagen COL1A1 and COL1A2 genes. May also function as a repressor of fibronectin and possibly other extracellular matrix genes. Potent driver of brown fat development, thermogenesis and cold-induced beige fat formation. Recruits the brown fat lncRNA 1 (Blnc1):HNRNPU ribonucleoprotein complex to activate thermogenic gene expression in brown and beige adipocytes. This is Zinc finger and BTB domain-containing protein 7B from Mus musculus (Mouse).